The primary structure comprises 103 residues: MAAKIRQNDEVIVLTGKDKGKRGKVTQVLPNGKVIVEGVKIITKHEKPVPALGKAGGLVKKEAAIDASNIAIFNPKTNKADRVGFRFEDGKKVRFFKSNNEII.

This sequence belongs to the universal ribosomal protein uL24 family. As to quaternary structure, part of the 50S ribosomal subunit.

Functionally, one of two assembly initiator proteins, it binds directly to the 5'-end of the 23S rRNA, where it nucleates assembly of the 50S subunit. One of the proteins that surrounds the polypeptide exit tunnel on the outside of the subunit. In Actinobacillus pleuropneumoniae serotype 5b (strain L20), this protein is Large ribosomal subunit protein uL24.